The primary structure comprises 106 residues: MLHRGRSCLTGLFPCYLLSNWLNSNLCWIPLKLVIPCFQLIVESYLLEFLLLLAISTCLLGEDSLIWLTLVVAHSKSRQSSSQEPLDTRMATRALLDQLRSDRRHN.

The protein localises to the mitochondrion. This is an uncharacterized protein from Arabidopsis thaliana (Mouse-ear cress).